A 336-amino-acid polypeptide reads, in one-letter code: Dihydroorotate dehydrogenase (quinone) (336 aa).

FMN is bound by residues 62–66 and Thr-86; that span reads AGLDK. Lys-66 contributes to the substrate binding site. A substrate-binding site is contributed by 111-115; that stretch reads NRMGF. Asn-139 and Asn-172 together coordinate FMN. Asn-172 contacts substrate. Ser-175 serves as the catalytic Nucleophile. Asn-177 is a substrate binding site. Residues Lys-217 and Thr-245 each coordinate FMN. Substrate is bound at residue 246-247; that stretch reads NT. Residues Gly-268, Gly-297, and 318 to 319 contribute to the FMN site; that span reads YS.

This sequence belongs to the dihydroorotate dehydrogenase family. Type 2 subfamily. As to quaternary structure, monomer. The cofactor is FMN.

The protein resides in the cell membrane. The catalysed reaction is (S)-dihydroorotate + a quinone = orotate + a quinol. The protein operates within pyrimidine metabolism; UMP biosynthesis via de novo pathway; orotate from (S)-dihydroorotate (quinone route): step 1/1. In terms of biological role, catalyzes the conversion of dihydroorotate to orotate with quinone as electron acceptor. This Shigella flexneri serotype 5b (strain 8401) protein is Dihydroorotate dehydrogenase (quinone).